We begin with the raw amino-acid sequence, 495 residues long: Sulfhydryl oxidase 2 (495 aa).

The signal sequence occupies residues 1–15 (MSLVHLLLFAGLVIA). The 136-residue stretch at 29-164 (EISDQKDKAV…LLNWINKQIG (136 aa)) folds into the Thioredoxin domain. Residue Asn41 is glycosylated (N-linked (GlcNAc...) asparagine). Active-site nucleophile residues include Cys66 and Cys69. The cysteines at positions 66 and 69 are disulfide-linked. 4 N-linked (GlcNAc...) asparagine glycosylation sites follow: Asn182, Asn257, Asn266, and Asn292. A disulfide bridge links Cys287 with Cys299. The ERV/ALR sulfhydryl oxidase domain occupies 290 to 392 (SKNDTRGFSC…GDPKFPKIIW (103 aa)). FAD is bound by residues Arg295, Trp302, His306, Glu336, His340, 363 to 370 (WSTHNKVN), Lys389, and Trp392. A disulfide bridge links Cys334 with Cys337. A disulfide bond links Cys398 and Cys401.

It depends on FAD as a cofactor.

The protein resides in the secreted. The enzyme catalyses 2 R'C(R)SH + O2 = R'C(R)S-S(R)CR' + H2O2. In terms of biological role, catalyzes the oxidation of sulfhydryl groups in peptide and protein thiols to disulfides with the reduction of oxygen to hydrogen peroxide. May contribute to disulfide bond formation in a variety of secreted proteins. The sequence is that of Sulfhydryl oxidase 2 (QSOX2) from Arabidopsis thaliana (Mouse-ear cress).